Here is a 434-residue protein sequence, read N- to C-terminus: Eukaryotic translation initiation factor 3 subunit E-2 (434 aa).

Residues 219–392 form the PCI domain; that stretch reads FFNHPKGRDL…GHVVMGTQPL (174 aa).

The protein belongs to the eIF-3 subunit E family. As to quaternary structure, component of the eukaryotic translation initiation factor 3 (eIF-3) complex. The eIF-3 complex interacts with pix. Interacts with mxt.

It is found in the cytoplasm. In terms of biological role, component of the eukaryotic translation initiation factor 3 (eIF-3) complex, which is involved in protein synthesis of a specialized repertoire of mRNAs and, together with other initiation factors, stimulates binding of mRNA and methionyl-tRNAi to the 40S ribosome. The eIF-3 complex specifically targets and initiates translation of a subset of mRNAs involved in cell proliferation. The protein is Eukaryotic translation initiation factor 3 subunit E-2 (eIF3-S6-2) of Drosophila willistoni (Fruit fly).